The chain runs to 437 residues: Phosphomethylpyrimidine synthase (437 aa).

Substrate-binding positions include N69, M98, Y127, H163, 185-187 (SRG), 226-229 (DACR), and E265. H269 is a binding site for Zn(2+). Y292 lines the substrate pocket. Position 333 (H333) interacts with Zn(2+). 3 residues coordinate [4Fe-4S] cluster: C409, C412, and C416.

Belongs to the ThiC family. [4Fe-4S] cluster serves as cofactor.

The enzyme catalyses 5-amino-1-(5-phospho-beta-D-ribosyl)imidazole + S-adenosyl-L-methionine = 4-amino-2-methyl-5-(phosphooxymethyl)pyrimidine + CO + 5'-deoxyadenosine + formate + L-methionine + 3 H(+). It functions in the pathway cofactor biosynthesis; thiamine diphosphate biosynthesis. Its function is as follows. Catalyzes the synthesis of the hydroxymethylpyrimidine phosphate (HMP-P) moiety of thiamine from aminoimidazole ribotide (AIR) in a radical S-adenosyl-L-methionine (SAM)-dependent reaction. This is Phosphomethylpyrimidine synthase from Clostridium botulinum (strain 657 / Type Ba4).